Consider the following 499-residue polypeptide: Gamma-aminobutyric acid receptor subunit beta (499 aa).

The N-terminal stretch at 1-23 is a signal peptide; sequence MWGIIVPFFSASLMCSLVAVVRC. The Extracellular segment spans residues 24–251; it reads QQDTDHFANV…IFQLQRNIGY (228 aa). 4 N-linked (GlcNAc...) asparagine glycosylation sites follow: asparagine 32, asparagine 98, asparagine 106, and asparagine 152. The cysteines at positions 167 and 181 are disulfide-linked. The next 3 membrane-spanning stretches (helical) occupy residues 252-273, 278-299, and 311-333; these read FIFQTYLPSILIVMLSWVSFWI, TSARVALGITTVLTMTTISNGV, and AIDIYLVMCFVFVFAALLEYAAV. Topologically, residues 334 to 475 are cytoplasmic; that stretch reads NYTYWGARAK…RVQDVNTIDK (142 aa). The helical transmembrane segment at 476 to 499 threads the bilayer; the sequence is YARLMFPLLFIIFNTSYWSVYLLT.

Belongs to the ligand-gated ion channel (TC 1.A.9) family. Gamma-aminobutyric acid receptor (TC 1.A.9.5) subfamily. As to quaternary structure, generally pentameric. There are five types of GABA(A) receptor chains: alpha, beta, gamma, delta, and rho.

Its subcellular location is the postsynaptic cell membrane. It is found in the cell membrane. Functionally, GABA, an inhibitory neurotransmitter, mediates neuronal inhibition by binding to the GABA/benzodiazepine receptor and opening an integral chloride channel. The protein is Gamma-aminobutyric acid receptor subunit beta of Lymnaea stagnalis (Great pond snail).